The following is a 172-amino-acid chain: Protein nemuri (172 aa).

A signal peptide spans 1–25; it reads MSAKYTLIFALAALCCLVFSTEAAA. The segment at 27–172 is disordered; the sequence is RSRVLSSRRG…KRRSGKGNKA (146 aa). Basic and acidic residues-rich tracts occupy residues 35-50, 58-90, and 97-108; these read RGSE…KEDS, DLER…DKET, and TIVKPNKDDARA. Residues 45 to 74 adopt a coiled-coil conformation; it reads DNKEDSELAAQEQDLERQEQEEQNDRLEGR. Basic residues predominate over residues 109–172; that stretch reads RRIVRAGRRR…KRRSGKGNKA (64 aa).

As to expression, detected in the brain where it accumulates in the dorsal fan-shaped body following sleep deprivation (at protein level). Expressed in the adult body.

The protein resides in the secreted. Functionally, antimicrobial protein which is essential for the homeostatic regulation of sleep. Promotes sleep following sleep deprivation or bacterial infection and increases survival following bacterial infection. Likely to promote survival to bacterial infection in two ways; by contributing to the innate immune response and by promoting sleep during sickness to aid recovery. The protein is Protein nemuri of Drosophila melanogaster (Fruit fly).